Here is a 273-residue protein sequence, read N- to C-terminus: Large ribosomal subunit protein uL2 (273 aa).

A disordered region spans residues 221–263 (RGTAMNPVDHPHGGGEGRNFGKHPVTPWGVQTKGKKTRHNKRT). Basic residues predominate over residues 253–263 (KGKKTRHNKRT).

This sequence belongs to the universal ribosomal protein uL2 family. As to quaternary structure, part of the 50S ribosomal subunit. Forms a bridge to the 30S subunit in the 70S ribosome.

In terms of biological role, one of the primary rRNA binding proteins. Required for association of the 30S and 50S subunits to form the 70S ribosome, for tRNA binding and peptide bond formation. It has been suggested to have peptidyltransferase activity; this is somewhat controversial. Makes several contacts with the 16S rRNA in the 70S ribosome. This chain is Large ribosomal subunit protein uL2, found in Actinobacillus succinogenes (strain ATCC 55618 / DSM 22257 / CCUG 43843 / 130Z).